Reading from the N-terminus, the 182-residue chain is NADH-quinone oxidoreductase subunit I (182 aa).

4Fe-4S ferredoxin-type domains are found at residues 52-82 (LTRD…LQKA) and 92-121 (EFFR…LTPD). Cys-62, Cys-65, Cys-68, Cys-72, Cys-101, Cys-104, Cys-107, and Cys-111 together coordinate [4Fe-4S] cluster.

Belongs to the complex I 23 kDa subunit family. As to quaternary structure, NDH-1 is composed of 13 different subunits. Subunits NuoA, H, J, K, L, M, N constitute the membrane sector of the complex. [4Fe-4S] cluster serves as cofactor.

It localises to the cell inner membrane. It carries out the reaction a quinone + NADH + 5 H(+)(in) = a quinol + NAD(+) + 4 H(+)(out). Its function is as follows. NDH-1 shuttles electrons from NADH, via FMN and iron-sulfur (Fe-S) centers, to quinones in the respiratory chain. The immediate electron acceptor for the enzyme in this species is believed to be ubiquinone. Couples the redox reaction to proton translocation (for every two electrons transferred, four hydrogen ions are translocated across the cytoplasmic membrane), and thus conserves the redox energy in a proton gradient. The polypeptide is NADH-quinone oxidoreductase subunit I (Pseudomonas putida (strain ATCC 47054 / DSM 6125 / CFBP 8728 / NCIMB 11950 / KT2440)).